The sequence spans 239 residues: ATP-dependent dethiobiotin synthetase BioD (239 aa).

15–20 serves as a coordination point for ATP; the sequence is EIGKTF. Thr-19 contributes to the Mg(2+) binding site. Residue Lys-40 is part of the active site. ATP is bound by residues Asp-57, 118-121, and 178-179; these read EGVG and NH. Asp-57 and Glu-118 together coordinate Mg(2+).

Belongs to the dethiobiotin synthetase family. Homodimer. It depends on Mg(2+) as a cofactor.

It localises to the cytoplasm. It catalyses the reaction (7R,8S)-7,8-diammoniononanoate + CO2 + ATP = (4R,5S)-dethiobiotin + ADP + phosphate + 3 H(+). The protein operates within cofactor biosynthesis; biotin biosynthesis; biotin from 7,8-diaminononanoate: step 1/2. Functionally, catalyzes a mechanistically unusual reaction, the ATP-dependent insertion of CO2 between the N7 and N8 nitrogen atoms of 7,8-diaminopelargonic acid (DAPA, also called 7,8-diammoniononanoate) to form a ureido ring. In Burkholderia cenocepacia (strain ATCC BAA-245 / DSM 16553 / LMG 16656 / NCTC 13227 / J2315 / CF5610) (Burkholderia cepacia (strain J2315)), this protein is ATP-dependent dethiobiotin synthetase BioD.